Here is a 452-residue protein sequence, read N- to C-terminus: tRNA modification GTPase MnmE (452 aa).

Residues R21, E78, and K118 each coordinate (6S)-5-formyl-5,6,7,8-tetrahydrofolate. In terms of domain architecture, TrmE-type G spans G214–G375. Position 224 (N224) interacts with K(+). Residues N224–S229, T243–T249, D268–G271, and N333–D336 each bind GTP. S228 is a binding site for Mg(2+). K(+) is bound by residues T243, I245, and T248. T249 lines the Mg(2+) pocket. Position 452 (K452) interacts with (6S)-5-formyl-5,6,7,8-tetrahydrofolate.

It belongs to the TRAFAC class TrmE-Era-EngA-EngB-Septin-like GTPase superfamily. TrmE GTPase family. Homodimer. Heterotetramer of two MnmE and two MnmG subunits. Requires K(+) as cofactor.

The protein resides in the cytoplasm. Exhibits a very high intrinsic GTPase hydrolysis rate. Involved in the addition of a carboxymethylaminomethyl (cmnm) group at the wobble position (U34) of certain tRNAs, forming tRNA-cmnm(5)s(2)U34. The polypeptide is tRNA modification GTPase MnmE (Pasteurella multocida (strain Pm70)).